Consider the following 179-residue polypeptide: NEDD8-conjugating enzyme UBC12 (179 aa).

The 145-residue stretch at 24–168 (AAQLRVQKDL…VKHSMAGGSV (145 aa)) folds into the UBC core domain. The active-site Glycyl thioester intermediate is the Cys106.

The protein belongs to the ubiquitin-conjugating enzyme family. UBC12 subfamily.

It catalyses the reaction [E1 NEDD8-activating enzyme]-S-[NEDD8 protein]-yl-L-cysteine + [E2 NEDD8-conjugating enzyme]-L-cysteine = [E1 NEDD8-activating enzyme]-L-cysteine + [E2 NEDD8-conjugating enzyme]-S-[NEDD8-protein]-yl-L-cysteine.. Its pathway is protein modification; protein neddylation. Functionally, accepts the ubiquitin-like protein NEDD8/RUB1 from the UBA3-ULA1 E1 complex and catalyzes its covalent attachment to other proteins. The chain is NEDD8-conjugating enzyme UBC12 (UBC12) from Yarrowia lipolytica (strain CLIB 122 / E 150) (Yeast).